The following is a 666-amino-acid chain: NADH-ubiquinone oxidoreductase chain 5 (666 aa).

The next 17 membrane-spanning stretches (helical) occupy residues 3 to 23 (LLIL…GRWL), 31 to 51 (FSTL…FEIG), 59 to 78 (IFLV…GFLF), 82 to 101 (TVTM…IYSI), 119 to 139 (IFTF…MFLG), 168 to 190 (LIVN…WVFN), 211 to 231 (FLGF…IGAI), 251 to 271 (TPVS…FLMI), 283 to 303 (ILFI…VTGV), 311 to 333 (VIAY…SCYD), 337 to 357 (FHLA…GSVI), 375 to 395 (FMPL…GFPF), 421 to 441 (YISF…FYSF), 467 to 487 (LLMI…GYLI), 524 to 544 (WLPF…QIFL), 572 to 594 (VLYN…FKIL), and 629 to 649 (YLFF…YSYI).

The protein belongs to the complex I subunit 5 family.

Its subcellular location is the mitochondrion inner membrane. It carries out the reaction a ubiquinone + NADH + 5 H(+)(in) = a ubiquinol + NAD(+) + 4 H(+)(out). Its function is as follows. Core subunit of the mitochondrial membrane respiratory chain NADH dehydrogenase (Complex I) that is believed to belong to the minimal assembly required for catalysis. Complex I functions in the transfer of electrons from NADH to the respiratory chain. The immediate electron acceptor for the enzyme is believed to be ubiquinone. The chain is NADH-ubiquinone oxidoreductase chain 5 (ND5) from Chondrus crispus (Carrageen Irish moss).